The following is a 651-amino-acid chain: PTS system sucrose-specific EIIBCA component (651 aa).

The 84-residue stretch at 3–86 (HQEVADRVLN…IVKTGLKEVT (84 aa)) folds into the PTS EIIB type-1 domain. The Phosphocysteine intermediate; for EIIB activity role is filled by cysteine 25. 10 consecutive transmembrane segments (helical) span residues 109-129 (VLSD…LLMA), 158-178 (MINA…GFSA), 182-202 (FGGN…PSLV), 204-224 (GYSV…VFGL), 226-246 (VAQA…FILA), 264-284 (FTPM…VGPV), 303-323 (TGWI…ITGL), 345-365 (FIFP…LAIF), 404-424 (FVFA…FHVL), and 444-464 (IPAF…PTFI). Residues 121–481 (LVAGGLLMAL…DDRDQVKSPA (361 aa)) form the PTS EIIC type-1 domain. One can recognise a PTS EIIA type-1 domain in the interval 510–614 (DQVFSAEIMG…DPTVMLIVTN (105 aa)). Histidine 562 functions as the Tele-phosphohistidine intermediate; for EIIA activity in the catalytic mechanism.

It is found in the cell membrane. The catalysed reaction is N(pros)-phospho-L-histidyl-[protein](out) + sucrose = sucrose 6(G)-phosphate(in) + L-histidyl-[protein]. Functionally, the phosphoenolpyruvate-dependent sugar phosphotransferase system (sugar PTS), a major carbohydrate active transport system, catalyzes the phosphorylation of incoming sugar substrates concomitantly with their translocation across the cell membrane. This system is involved in sucrose transport. This is PTS system sucrose-specific EIIBCA component (scrA) from Pediococcus pentosaceus.